Here is a 114-residue protein sequence, read N- to C-terminus: Lymphotactin (114 aa).

The first 21 residues, 1–21 (MRLLILALLGICSLTAYIVEG), serve as a signal peptide directing secretion. Residues Cys32 and Cys69 are joined by a disulfide bond. The interval 91 to 114 (RNNMIQTKPTGTQQSTNTAVTLTG) is disordered.

Belongs to the intercrine gamma family. Highest level in spleen, lower in peripheral leukocytes and very low levels in lung, colon and small intestine.

Its subcellular location is the secreted. Functionally, chemotactic activity for lymphocytes but not for monocytes or neutrophils. In thymus, mediates medullary accumulation of thymic dendritic cells and contributes to regulatoy T cell development, playing a role in self-tolerance establishment. This chain is Lymphotactin (XCL1), found in Homo sapiens (Human).